The chain runs to 220 residues: Kinetochore protein Spc25 (220 aa).

Positions H79–E114 form a coiled coil.

Belongs to the SPC25 family. In terms of assembly, component of the Ndc80 complex, which is composed of Ndc80, Nuf2 and Spc25.

The protein localises to the nucleus. Its subcellular location is the chromosome. The protein resides in the centromere. It localises to the kinetochore. In terms of biological role, acts as a component of the essential kinetochore-associated Ndc80 complex, which is required for chromosome segregation and spindle checkpoint activity during meiosis and mitosis. Required for kinetochore integrity and the organization of stable microtubule binding sites in the outer plate of the kinetochore. Participates in SAC signaling that responds specifically to disruptions in spindle microtubule dynamics. The NDC80 complex synergistically enhances the affinity of the SKA1 complex for microtubules and may allow the NDC80 complex to track depolymerizing microtubules. This is Kinetochore protein Spc25 from Drosophila orena (Fruit fly).